The following is a 1072-amino-acid chain: Carbamoyl phosphate synthase large chain (1072 aa).

Residues 1–401 (MPKRLDINTI…SLLKAVRSLE (401 aa)) form a carboxyphosphate synthetic domain region. ATP contacts are provided by arginine 129, arginine 169, glycine 175, glycine 176, lysine 208, isoleucine 210, glutamate 215, glycine 241, valine 242, histidine 243, glutamine 284, and glutamate 298. The 195-residue stretch at 133–327 (RTLMQDLNEP…IAKLAAKIAV (195 aa)) folds into the ATP-grasp 1 domain. Residues glutamine 284, glutamate 298, and asparagine 300 each coordinate Mg(2+). Mn(2+) contacts are provided by glutamine 284, glutamate 298, and asparagine 300. Residues 402-546 (LGIYHLELDH…YSTYADENES (145 aa)) form an oligomerization domain region. Residues 547–929 (IVTDRKSVVV…ALYKGLVASG (383 aa)) form a carbamoyl phosphate synthetic domain region. Positions 671-861 (EAALTKLGIP…MANVATKVIL (191 aa)) constitute an ATP-grasp 2 domain. Arginine 707, arginine 746, glutamate 752, glycine 777, valine 778, histidine 779, serine 780, glutamine 820, and glutamate 832 together coordinate ATP. 3 residues coordinate Mg(2+): glutamine 820, glutamate 832, and asparagine 834. Mn(2+)-binding residues include glutamine 820, glutamate 832, and asparagine 834. Residues 930–1072 (INIPTHGSVI…QTKRHEVVHA (143 aa)) enclose the MGS-like domain. Residues 930–1072 (INIPTHGSVI…QTKRHEVVHA (143 aa)) are allosteric domain.

The protein belongs to the CarB family. Composed of two chains; the small (or glutamine) chain promotes the hydrolysis of glutamine to ammonia, which is used by the large (or ammonia) chain to synthesize carbamoyl phosphate. Tetramer of heterodimers (alpha,beta)4. It depends on Mg(2+) as a cofactor. The cofactor is Mn(2+).

It carries out the reaction hydrogencarbonate + L-glutamine + 2 ATP + H2O = carbamoyl phosphate + L-glutamate + 2 ADP + phosphate + 2 H(+). The enzyme catalyses hydrogencarbonate + NH4(+) + 2 ATP = carbamoyl phosphate + 2 ADP + phosphate + 2 H(+). The protein operates within amino-acid biosynthesis; L-arginine biosynthesis; carbamoyl phosphate from bicarbonate: step 1/1. It participates in pyrimidine metabolism; UMP biosynthesis via de novo pathway; (S)-dihydroorotate from bicarbonate: step 1/3. Its function is as follows. Large subunit of the glutamine-dependent carbamoyl phosphate synthetase (CPSase). CPSase catalyzes the formation of carbamoyl phosphate from the ammonia moiety of glutamine, carbonate, and phosphate donated by ATP, constituting the first step of 2 biosynthetic pathways, one leading to arginine and/or urea and the other to pyrimidine nucleotides. The large subunit (synthetase) binds the substrates ammonia (free or transferred from glutamine from the small subunit), hydrogencarbonate and ATP and carries out an ATP-coupled ligase reaction, activating hydrogencarbonate by forming carboxy phosphate which reacts with ammonia to form carbamoyl phosphate. The polypeptide is Carbamoyl phosphate synthase large chain (Bacillus cereus (strain B4264)).